The following is a 589-amino-acid chain: Guanylate-binding protein 2 (589 aa).

The GTPase domain (Globular) stretch occupies residues 1–309 (MASEIHMLQP…GAISSGSLPC (309 aa)). One can recognise a GB1/RHD3-type G domain in the interval 35–276 (NQPVVVVAIV…FTSYIFSYSA (242 aa)). GTP-binding positions include 45 to 52 (GLYRTGKS), 181 to 182 (RD), and leucine 245. Residue cysteine 586 is modified to Cysteine methyl ester. Cysteine 586 carries S-geranylgeranyl cysteine lipidation. The propeptide at 587–589 (TIL) is removed in mature form.

The protein belongs to the TRAFAC class dynamin-like GTPase superfamily. GB1/RHD3 GTPase family. GB1 subfamily. As to quaternary structure, homodimer; homodimerization occurs upon GTP-binding and is required for the association with membranous structures. Heterodimer with other family members, including GBP1, GBP3, GBP4 and GBP5. In terms of processing, isoprenylation is required for proper subcellular location. As to expression, widely expressed.

Its subcellular location is the cytoplasmic vesicle membrane. It is found in the golgi apparatus membrane. The protein localises to the cytoplasm. It localises to the perinuclear region. The enzyme catalyses GTP + H2O = GDP + phosphate + H(+). Functionally, interferon (IFN)-inducible GTPase that plays important roles in innate immunity against a diverse range of bacterial, viral and protozoan pathogens. Hydrolyzes GTP to GMP in 2 consecutive cleavage reactions, but the major reaction product is GDP. Following infection, recruited to the pathogen-containing vacuoles or vacuole-escaped bacteria and acts as a positive regulator of inflammasome assembly by promoting the release of inflammasome ligands from bacteria. Acts by promoting lysis of pathogen-containing vacuoles, releasing pathogens into the cytosol. Following pathogen release in the cytosol, promotes recruitment of proteins that mediate bacterial cytolysis: this liberates ligands that are detected by inflammasomes, such as lipopolysaccharide (LPS) that activates the non-canonical CASP4/CASP11 inflammasome or double-stranded DNA (dsDNA) that activates the AIM2 inflammasome. Confers protection to the protozoan pathogen Toxoplasma gondii. Independently of its GTPase activity, acts as an inhibitor of various viruses infectivity by inhibiting FURIN-mediated maturation of viral envelope proteins. In Rattus norvegicus (Rat), this protein is Guanylate-binding protein 2 (Gbp2).